A 375-amino-acid polypeptide reads, in one-letter code: FAD-dependent catabolic D-arginine dehydrogenase DauA (375 aa).

Residues A14, 32–33 (ER), 41–48 (STGRSAAH), A171, and 331–336 (GGYGIQ) each bind FAD.

It belongs to the FAD-dependent glycerol-3-phosphate dehydrogenase family. Monomer. The cofactor is FAD.

The catalysed reaction is D-arginine + A + H2O = 5-guanidino-2-oxopentanoate + AH2 + NH4(+). The enzyme catalyses a D-alpha-amino acid + A + H2O = a 2-oxocarboxylate + AH2 + NH4(+). Inhibited by D-arginine and D-lysine at high concentration. Its function is as follows. DauA is highly expressed within the cystic fibrosis (CF) lung, and it is required for virulence via the optimal production of hydrogen cyanide, pyocyanine, pyoverdine, rhamnolipid and alginate during biofilm formation. Involved in the catabolism of D-lysine and D-arginine. Under aerobic conditions, the arginine succinyltransferase (AST) and arginine transaminase (ATA) pathways are 2 major routes for L-arginine utilization as the sole source of carbon and nitrogen. The D-to-L racemization of arginine by DauA and DauB is necessary, before to be channeled into the AST and/or ATA pathways. DauA catalyzes the flavin-dependent oxidative deamination of D-arginine into 2-ketoarginine (2-KA) and ammonia. It also has dehydrogenase activity towards D-lysine, D-tyrosine, D-methionine, D-phenylalanine, D-ornithine, D-histidine and D-leucine as substrates. The chain is FAD-dependent catabolic D-arginine dehydrogenase DauA from Pseudomonas aeruginosa (strain ATCC 15692 / DSM 22644 / CIP 104116 / JCM 14847 / LMG 12228 / 1C / PRS 101 / PAO1).